Reading from the N-terminus, the 591-residue chain is Probable cyclin-dependent kinase 9 (591 aa).

The tract at residues 1–385 (MKRSSSVSVE…FEQTANGKRQ (385 aa)) is interaction with pch1. One can recognise a Protein kinase domain in the interval 36–339 (YHLMEKLGEG…ASMALEHEYF (304 aa)). Residues 42-50 (LGEGTFGEV) and lysine 65 each bind ATP. Aspartate 166 acts as the Proton acceptor in catalysis. Tyrosine 211 carries the phosphotyrosine modification. Position 212 is a phosphothreonine (threonine 212). 2 disordered regions span residues 341–534 (TPPY…KTQH) and 549–591 (ARQS…DTPK). The segment covering 358–372 (HEYDKRRKREQRDAN) has biased composition (basic and acidic residues). Polar residues-rich tracts occupy residues 404–415 (NYNSQPQYQRGS) and 428–465 (NVNY…TSNH). The interval 442–523 (LTSDLPQKNS…NSKVQTTSRA (82 aa)) is binds to pct1. A compositionally biased stretch (basic and acidic residues) spans 466 to 482 (SHADGQRYYRPEQDRSQ). Low complexity predominate over residues 491–502 (GRQGRQSSQSQQ). The segment covering 503–534 (PAWNVSSRYQNNSKVQTTSRASENADTNKTQH) has biased composition (polar residues). Phosphothreonine is present on threonine 565. Residue serine 577 is modified to Phosphoserine.

This sequence belongs to the protein kinase superfamily. CMGC Ser/Thr protein kinase family. CDC2/CDKX subfamily. In terms of assembly, interacts with pch1 cyclin via its N-terminal domain. Via its C-terminal domain, interacts with RNA triphosphatase pct1 which is involved in mRNA capping. Also interacts with pcm1.

It is found in the nucleus. The enzyme catalyses L-seryl-[protein] + ATP = O-phospho-L-seryl-[protein] + ADP + H(+). It carries out the reaction L-threonyl-[protein] + ATP = O-phospho-L-threonyl-[protein] + ADP + H(+). The catalysed reaction is [DNA-directed RNA polymerase] + ATP = phospho-[DNA-directed RNA polymerase] + ADP + H(+). Its activity is regulated as follows. May be activated by autophosphorylation or phosphorylation by a separate activating kinase. Functionally, component of the positive transcription elongation factor b (P-TEFb) which consists of cdk9 and pch1, and which phosphorylates the C-terminal domain (CTD) of RNA polymerase II and spt5. The chain is Probable cyclin-dependent kinase 9 (cdk9) from Schizosaccharomyces pombe (strain 972 / ATCC 24843) (Fission yeast).